A 152-amino-acid polypeptide reads, in one-letter code: Nucleoside diphosphate kinase A 2 (152 aa).

ATP-binding residues include K12, F60, R88, T94, R105, and N115. The Pros-phosphohistidine intermediate role is filled by H118.

This sequence belongs to the NDK family. Homohexamer. The cofactor is Mg(2+). In terms of processing, the N-terminus is blocked.

It is found in the cytoplasm. It localises to the cell membrane. The protein resides in the nucleus. The enzyme catalyses a 2'-deoxyribonucleoside 5'-diphosphate + ATP = a 2'-deoxyribonucleoside 5'-triphosphate + ADP. It carries out the reaction a ribonucleoside 5'-diphosphate + ATP = a ribonucleoside 5'-triphosphate + ADP. Its activity is regulated as follows. Autophosphorylation at His-118 increases serine/threonine protein kinase activity of the enzyme. Interaction with the SET complex inhibits exonuclease activity. Its function is as follows. Major role in the synthesis of nucleoside triphosphates other than ATP. Possesses nucleoside-diphosphate kinase, serine/threonine-specific protein kinase, geranyl and farnesyl pyrophosphate kinase, histidine protein kinase and 3'-5' exonuclease activities. Involved in cell proliferation, differentiation and development, signal transduction, G protein-coupled receptor endocytosis, and gene expression. Required for neural development including neural patterning and cell fate determination. The polypeptide is Nucleoside diphosphate kinase A 2 (NME1-2) (Bos taurus (Bovine)).